The primary structure comprises 109 residues: Protein TAR1 (109 aa).

The interval 62–109 (HFTNNWDPRHTGFSPSMTSCSKEHRQGPATKLPSSNYNSDVEDARFQI) is disordered.

Its subcellular location is the mitochondrion. In terms of biological role, may be involved in mtDNA stability or mitochondrial gene expression regulation at the post-transcriptional level. In Kluyveromyces lactis (strain ATCC 8585 / CBS 2359 / DSM 70799 / NBRC 1267 / NRRL Y-1140 / WM37) (Yeast), this protein is Protein TAR1 (TAR1-A).